Consider the following 314-residue polypeptide: L-lactate dehydrogenase (314 aa).

NAD(+) contacts are provided by residues Val-16, Asp-37, Lys-42, Tyr-68, and 82 to 83; that span reads GV. Substrate contacts are provided by Gln-85 and Arg-91. Residues Ser-104, 121–123, and Thr-146 contribute to the NAD(+) site; that span reads ASN. 123–126 is a binding site for substrate; it reads NPVD. 151-154 contributes to the substrate binding site; sequence DTTR. Positions 156 and 171 each coordinate beta-D-fructose 1,6-bisphosphate. His-178 serves as the catalytic Proton acceptor. Position 223 is a phosphotyrosine (Tyr-223). Position 232 (Thr-232) interacts with substrate.

This sequence belongs to the LDH/MDH superfamily. LDH family. As to quaternary structure, homotetramer.

Its subcellular location is the cytoplasm. It catalyses the reaction (S)-lactate + NAD(+) = pyruvate + NADH + H(+). The protein operates within fermentation; pyruvate fermentation to lactate; (S)-lactate from pyruvate: step 1/1. Allosterically activated by fructose 1,6-bisphosphate (FBP). Catalyzes the conversion of lactate to pyruvate. This is L-lactate dehydrogenase from Lactococcus lactis subsp. cremoris (strain MG1363).